Here is a 432-residue protein sequence, read N- to C-terminus: FAD-dependent monooxygenase pynG (432 aa).

FAD-binding residues include Glu32, Arg103, Asp315, and Ala328.

This sequence belongs to the paxM FAD-dependent monooxygenase family. The cofactor is FAD.

Its pathway is secondary metabolite biosynthesis. Its function is as follows. FAD-dependent monooxygenase; part of the gene cluster that mediates the biosynthesis of pyranonigrins, a family of antioxidative compounds. The first step of pyranonigrins biosynthesis is performed by the hybrid PKS-NRPS synthetase that condenses 6 malonyl-CoA units to an acetyl starter unit, to form a 1,3,5-trioxotetradecane-6,8-dienyl-ACP. The enoyl reductase (ER) domain of pynA is likely to be functional during the first two rounds of polyketide chain extension, to generate the saturated C-C bonds of the alkyl side chain. PynA subsequently forms the amide bond between the acyl chain and L-serine. Although pynA has a terminal reductase domain, it appears to require the thioesterase pynI for the release of the straight-chain intermediate from pynA via the formation of a tetramic acid pyranonigrin J. The methyltransferase pynC then coverts pyranonigrin J to pyranonigrin I via N-methylation. The FAD-dependent monooxygenase pynG catalyzes an epoxidation-mediated cyclization to form the dihydro-gamma-pyrone moiety, followed by pynD-catalyzed oxidation of the alcohol to the ketone and enolization to yield the characteristic tetramic acid-fused gamma-pyrone core of pyranonigrin H. Pyranonigrin H is substrate of pynH for dehydration-mediated exo-methylene formation from the serine side chain to produce pyranonigrin E, before the oxidase pynE reduces the exo-methylene of pyranonigrin E into a pendant methyl to form pyranonigrin G. The FAD-linked oxidoreductase pynB performs the reverse reaction and converts pyranonigrin G back to pyranonigrin E. The protein is FAD-dependent monooxygenase pynG of Aspergillus niger (strain ATCC MYA-4892 / CBS 513.88 / FGSC A1513).